The chain runs to 144 residues: Large ribosomal subunit protein uL11 (144 aa).

The protein belongs to the universal ribosomal protein uL11 family. In terms of assembly, part of the ribosomal stalk of the 50S ribosomal subunit. Interacts with L10 and the large rRNA to form the base of the stalk. L10 forms an elongated spine to which L12 dimers bind in a sequential fashion forming a multimeric L10(L12)X complex. Post-translationally, one or more lysine residues are methylated.

Functionally, forms part of the ribosomal stalk which helps the ribosome interact with GTP-bound translation factors. The polypeptide is Large ribosomal subunit protein uL11 (Neisseria meningitidis serogroup A / serotype 4A (strain DSM 15465 / Z2491)).